A 486-amino-acid polypeptide reads, in one-letter code: Malonate-semialdehyde dehydrogenase (486 aa).

Residues F154, K178, E181, R182, and S231 each coordinate NAD(+). C286 functions as the Nucleophile in the catalytic mechanism. E386 is an NAD(+) binding site.

This sequence belongs to the aldehyde dehydrogenase family. IolA subfamily. Homotetramer.

It catalyses the reaction 3-oxopropanoate + NAD(+) + CoA + H2O = hydrogencarbonate + acetyl-CoA + NADH + H(+). The enzyme catalyses 2-methyl-3-oxopropanoate + NAD(+) + CoA + H2O = propanoyl-CoA + hydrogencarbonate + NADH + H(+). It participates in polyol metabolism; myo-inositol degradation into acetyl-CoA; acetyl-CoA from myo-inositol: step 7/7. Its function is as follows. Catalyzes the oxidation of malonate semialdehyde (MSA) and methylmalonate semialdehyde (MMSA) into acetyl-CoA and propanoyl-CoA, respectively. Is involved in a myo-inositol catabolic pathway. Bicarbonate, and not CO2, is the end-product of the enzymatic reaction. This chain is Malonate-semialdehyde dehydrogenase, found in Bacillus cereus (strain ATCC 14579 / DSM 31 / CCUG 7414 / JCM 2152 / NBRC 15305 / NCIMB 9373 / NCTC 2599 / NRRL B-3711).